We begin with the raw amino-acid sequence, 225 residues long: NAD(P)H-quinone oxidoreductase subunit K, chloroplastic (225 aa).

Positions 43, 44, 108, and 139 each coordinate [4Fe-4S] cluster.

It belongs to the complex I 20 kDa subunit family. As to quaternary structure, NDH is composed of at least 16 different subunits, 5 of which are encoded in the nucleus. [4Fe-4S] cluster is required as a cofactor.

It localises to the plastid. Its subcellular location is the chloroplast thylakoid membrane. It carries out the reaction a plastoquinone + NADH + (n+1) H(+)(in) = a plastoquinol + NAD(+) + n H(+)(out). The catalysed reaction is a plastoquinone + NADPH + (n+1) H(+)(in) = a plastoquinol + NADP(+) + n H(+)(out). In terms of biological role, NDH shuttles electrons from NAD(P)H:plastoquinone, via FMN and iron-sulfur (Fe-S) centers, to quinones in the photosynthetic chain and possibly in a chloroplast respiratory chain. The immediate electron acceptor for the enzyme in this species is believed to be plastoquinone. Couples the redox reaction to proton translocation, and thus conserves the redox energy in a proton gradient. This is NAD(P)H-quinone oxidoreductase subunit K, chloroplastic from Illicium oligandrum (Star anise).